Here is a 137-residue protein sequence, read N- to C-terminus: Small integral membrane protein 9 (137 aa).

The signal sequence occupies residues 1–23 (MKPLKLFCIGLLLCPLVCLLLET). The Extracellular segment spans residues 24-84 (APPPSALLTL…NHLSDFFKSS (61 aa)). The helical transmembrane segment at 85-105 (IPPAAIFALFVTTAIMRAAIV) threads the bilayer. Residues 106-137 (NKRLEEPHRQWTIDQRSSLEMQNMNLIKLFGG) lie on the Cytoplasmic side of the membrane.

The protein localises to the cell membrane. The protein is Small integral membrane protein 9 (Smim9) of Mus musculus (Mouse).